The following is a 367-amino-acid chain: MSTFLLTWIIMTVALSVTLFLMPQQTNAARAFFVFGDSLVDSGNNNYLVTTARADSPPYGIDYPTGRPTGRFSNGLNLPDIISEQIGSEPTLPILSPELTGEKLLIGANFASAGIGILNDTGVQFLNILRIGRQFELFQEYQERVSEIIGSDKTQQLVNGALVLMTLGGNDFVNNYFFPISTRRRQSSLGEFSQLLISEYKKILTSLYELGARRVMVTGTGPLGCVPAELASSGSVNGECAPEAQQAAAIFNPLLVQMLQGLNREIGSDVFIGANAFNTNADFINNPQRFGFVTSKVACCGQGAYNGQGVCTPLSTLCSDRNAYAFWDPFHPTEKATRLIVQQIMTGSVEYMNPMNLSTIMALDSRI.

The N-terminal stretch at 1 to 28 is a signal peptide; that stretch reads MSTFLLTWIIMTVALSVTLFLMPQQTNA. Serine 38 serves as the catalytic Nucleophile. Asparagine 119 is a glycosylation site (N-linked (GlcNAc...) asparagine). Active-site residues include aspartate 328 and histidine 331. Residue asparagine 356 is glycosylated (N-linked (GlcNAc...) asparagine).

This sequence belongs to the 'GDSL' lipolytic enzyme family.

Its subcellular location is the secreted. This Arabidopsis thaliana (Mouse-ear cress) protein is GDSL esterase/lipase At4g28780.